A 185-amino-acid chain; its full sequence is Auxin-responsive protein IAA34 (185 aa).

The short motif at 63-67 (LGLSL) is the EAR-like (transcriptional repression) element. In terms of domain architecture, PB1 spans 92–180 (WGYVKVTMDG…ERLRITRRND (89 aa)).

It belongs to the Aux/IAA family. As to quaternary structure, homodimers and heterodimers.

It localises to the nucleus. Aux/IAA proteins are short-lived transcriptional factors that function as repressors of early auxin response genes at low auxin concentrations. Repression is thought to result from the interaction with auxin response factors (ARFs), proteins that bind to the auxin-responsive promoter element (AuxRE). Formation of heterodimers with ARF proteins may alter their ability to modulate early auxin response genes expression. This chain is Auxin-responsive protein IAA34 (IAA34), found in Arabidopsis thaliana (Mouse-ear cress).